The chain runs to 407 residues: Peptidase T (407 aa).

Zn(2+) is bound at residue H78. The active site involves D80. D139 is a Zn(2+) binding site. The active-site Proton acceptor is the E173. E174, D196, and H378 together coordinate Zn(2+).

Belongs to the peptidase M20B family. It depends on Zn(2+) as a cofactor.

The protein resides in the cytoplasm. It catalyses the reaction Release of the N-terminal residue from a tripeptide.. Its function is as follows. Cleaves the N-terminal amino acid of tripeptides. This is Peptidase T from Macrococcus caseolyticus (strain JCSC5402) (Macrococcoides caseolyticum).